The following is a 433-amino-acid chain: Enolase (433 aa).

Q167 contacts (2R)-2-phosphoglycerate. The active-site Proton donor is E209. Mg(2+)-binding residues include D246, E291, and D318. K343, R372, S373, and K394 together coordinate (2R)-2-phosphoglycerate. Catalysis depends on K343, which acts as the Proton acceptor.

Belongs to the enolase family. As to quaternary structure, component of the RNA degradosome, a multiprotein complex involved in RNA processing and mRNA degradation. The cofactor is Mg(2+).

It localises to the cytoplasm. The protein localises to the secreted. It is found in the cell surface. The enzyme catalyses (2R)-2-phosphoglycerate = phosphoenolpyruvate + H2O. Its pathway is carbohydrate degradation; glycolysis; pyruvate from D-glyceraldehyde 3-phosphate: step 4/5. Catalyzes the reversible conversion of 2-phosphoglycerate (2-PG) into phosphoenolpyruvate (PEP). It is essential for the degradation of carbohydrates via glycolysis. The polypeptide is Enolase (Sodalis glossinidius (strain morsitans)).